Reading from the N-terminus, the 527-residue chain is Importin subunit alpha (527 aa).

Residues 1–58 (MSLRPNSRTEARRSRYKVAVDAEEGRRRREDNMVEIRKNKREENLLKKRREGLLQAQQ) enclose the IBB domain. ARM repeat units lie at residues 109-151 (IEEV…TSEN), 152-196 (TKVV…YRDL), 197-234 (VLGHGALVALLAQFNEQAKLSMLRNATWTLSNFCRGKP), 235-279 (QPLF…DKIQ), 280-319 (AVIEAGVCSRLVELLLHSSPSVLIPALRTVGNIVTGDDIQ), 320-362 (TQVM…NRNQ), 363-403 (IQIV…GGNH), and 404-445 (DQIK…KIGE).

The protein belongs to the importin alpha family. As to quaternary structure, forms a complex with importin subunit beta-1.

The protein resides in the cytoplasm. In terms of biological role, binds specifically and directly to substrates containing either a simple or bipartite NLS motif. Promotes docking of import substrates to the nuclear envelope. Seems to act as a cytosolic receptor for both simple and bipartite NLS motifs. The sequence is that of Importin subunit alpha from Solanum lycopersicum (Tomato).